Reading from the N-terminus, the 379-residue chain is Tubby-like F-box protein 7 (379 aa).

Polar residues predominate over residues 18-28; the sequence is FHQGETTTAPE. The tract at residues 18–41 is disordered; that stretch reads FHQGETTTAPESESIPPPSNMAGS. Residues 42–97 form the F-box domain; that stretch reads SSWSAMLPELLGEIIRRVEETEDRWPQRRDVVTCACVSKKWREITHDFARSSLNSG. Disordered stretches follow at residues 193-212 and 248-278; these read SQPP…RRFA and TLRC…IMKK.

The protein belongs to the TUB family. As to expression, ubiquitous.

This chain is Tubby-like F-box protein 7, found in Arabidopsis thaliana (Mouse-ear cress).